We begin with the raw amino-acid sequence, 251 residues long: Chloride intracellular channel protein 5 (251 aa).

The required for insertion into the membrane stretch occupies residues 1 to 98 (MTDSATANGD…EEFLEETLTP (98 aa)). Residues 32-35 (CPFS) carry the G-site motif. The helical transmembrane segment at 34–54 (FSQRLFMILWLKGVVFNVTTV) threads the bilayer. Residues 101 to 241 (YPKLAARHRE…AADSEIELAY (141 aa)) enclose the GST C-terminal domain.

This sequence belongs to the chloride channel CLIC family. In terms of assembly, component of a multimeric complex consisting of several cytoskeletal proteins, including actin, ezrin, alpha-actinin, gelsolin, and IQGAP1. Interacts with AKAP9. Interacts with TPRN. TPRN, CLIC5 and PTPQR form concentric rings at the base of stereocilia and may form a complex. Interacts with EZR, MYO6 and RDX; the proteins may work together as a complex to stabilize linkages between the plasma membrane and subjacent actin cytoskeleton at the stereocilium base. Detected in cochlea, in cochlear and vestibular hair cell bundles in the organ of Corti (at protein level). Expressed neonatal and adult cardiomyocytes (at protein level).

It localises to the golgi apparatus. Its subcellular location is the cytoplasm. It is found in the cytoskeleton. The protein resides in the microtubule organizing center. The protein localises to the centrosome. It localises to the cell cortex. Its subcellular location is the membrane. It is found in the apical cell membrane. The protein resides in the mitochondrion. The protein localises to the cell projection. It localises to the stereocilium. The enzyme catalyses Na(+)(in) = Na(+)(out). It catalyses the reaction K(+)(in) = K(+)(out). It carries out the reaction chloride(in) = chloride(out). Its activity is regulated as follows. Inhibited by F-actin. In terms of biological role, in the soluble state, catalyzes glutaredoxin-like thiol disulfide exchange reactions with reduced glutathione as electron donor. Can insert into membranes and form non-selective ion channels almost equally permeable to Na(+), K(+) and Cl(-). Required for normal hearing. It is necessary for the formation of stereocilia in the inner ear and normal development of the organ of Corti. May play a role in the regulation of transepithelial ion absorption and secretion. Is required for the development and/or maintenance of the proper glomerular endothelial cell and podocyte architecture. Plays a role in formation of the lens suture in the eye, which is important for normal optical properties of the lens. The polypeptide is Chloride intracellular channel protein 5 (Clic5) (Rattus norvegicus (Rat)).